A 234-amino-acid polypeptide reads, in one-letter code: NLP effector protein 1 (234 aa).

The first 18 residues, 1 to 18 (MQLRAFISVFASLACVNA), serve as a signal peptide directing secretion. N-linked (GlcNAc...) asparagine glycosylation is present at asparagine 66. Residues 102 to 112 (AFMYSWYMPKD) carry the Conserved undecapeptide motif I motif. The short motif at 119–125 (GHRHDWE) is the Hepta-peptide GHRHDWE motif II element.

It belongs to the Necrosis inducing protein (NPP1) family.

The protein resides in the secreted. Secreted effector that contributes to virulence during infection by P.capsici. Induces distinct chlorosis at 3 days after inoculation of host C.annuum leaves, and all the chlorotic areas gradually turn brown and become moderately necrotic at 7 days after inoculation. Leads only to chlorotic areas, without necrosis at 7 days after non-host N.benthamiana leaves infection. Induces cell death in hot pepper. This Phytophthora capsici protein is NLP effector protein 1.